Here is a 391-residue protein sequence, read N- to C-terminus: Saxitoxin and tetrodotoxin-binding protein 1 (391 aa).

The first 20 residues, 1–20 (MGAVPGVVLLLMLAVLGIRA), serve as a signal peptide directing secretion. 2 consecutive repeat copies span residues 24-202 (PEEC…HKKS) and 203-391 (PEEC…PEQD). 7 N-linked (GlcNAc...) asparagine glycosylation sites follow: N54, N63, N97, N234, N268, N277, and N307.

As to quaternary structure, homodimer or heterodimer of PSTBP1 and PSTBP2. Glycosylated.

The protein resides in the secreted. Functionally, binds both saxitoxin and tetradotoxin. May play a role in toxin accumulation and/or excretion. In Takifugu pardalis (Panther puffer), this protein is Saxitoxin and tetrodotoxin-binding protein 1 (psbp1).